Consider the following 1321-residue polypeptide: C-Jun-amino-terminal kinase-interacting protein 4 (1321 aa).

M1 is modified (N-acetylmethionine). An RH1 domain is found at 7–95 (VVYQEEPGGS…ITQYEREKAL (89 aa)). The stretch at 66 to 166 (AQDQEHQVEL…NALHQRHTEM (101 aa)) forms a coiled coil. Residues S109, S183, S185, S194, and S203 each carry the phosphoserine modification. The tract at residues 203-292 (SLGIFPLPAG…SDVATIPTDT (90 aa)) is disordered. Position 217 is a phosphothreonine (T217). Polar residues predominate over residues 236-253 (ELSQPRSHTSLKVSNSPE). Residues S238, S251, S265, S268, and S272 each carry the phosphoserine modification. The segment covering 266–285 (DVSQGGSKATTPASTANSDV) has biased composition (polar residues). Residue T292 is modified to Phosphothreonine. Phosphoserine is present on residues S311, S329, S332, and S347. Phosphothreonine occurs at positions 348, 365, and 418. Residues 408–534 (REVENLILEN…LQEAVRWTEM (127 aa)) adopt a coiled-coil conformation. The span at 473–489 (LRKARAEAEDARQKAKD) shows a compositional bias: basic and acidic residues. 2 disordered regions span residues 473-500 (LRKA…TAQR) and 563-600 (SSNT…SQLP). Residues 500–571 (RKRFTRVEMA…SSSNTTKKPE (72 aa)) form the RH2 domain. T586 is modified (phosphothreonine). The residue at position 588 (S588) is a Phosphoserine. T595 is subject to Phosphothreonine. A phosphoserine mark is found at S705, S728, S730, S732, and S733. Residues 724 to 758 (SKQRSASQSSLDKLDQELKEQQKELKNQEELSSLV) are a coiled coil. Positions 854–906 (GAATSPSTNGASPVMDKPPEMEAENSEVDENVPTAEEATEATEGNAGSAEDTV) are disordered. The segment covering 855 to 864 (AATSPSTNGA) has biased composition (polar residues). A compositionally biased stretch (acidic residues) spans 874-883 (MEAENSEVDE). Over residues 894–903 (ATEGNAGSAE) the composition is skewed to low complexity. A Phosphoserine modification is found at S1188. The tract at residues 1239-1266 (PQSSSSGTDLTGDKAGPSAQEPGSQTPL) is disordered. Residue T1264 is modified to Phosphothreonine.

It belongs to the JIP scaffold family. Homodimer. The homodimer interacts with ARF6, forming a heterotetramer. Homooligomer. Interacts with MAX, MAPK14, MAP3K3, MYC, KNS2 and MAP2K4. Interaction with KNS2 is important in the formation of ternary complex with MAPK8. Interacts with NFKB1. Interacts with PIP4P1. Interacts with PIKFYVE. As to quaternary structure, interacts with MAPK8, MAPK9, MAPK10. In terms of processing, phosphorylated by MAPK8 and MAPK14. In terms of tissue distribution, expressed only in testis on the round spermatids of stage I, II and II. Absent in spermatogonia and spermatocyte. As to expression, expressed in testis and in acute myeloid leukemia (AML) patients. Expressed in testis.

The protein resides in the cytoplasm. Its subcellular location is the perinuclear region. The protein localises to the lysosome membrane. It localises to the cytoplasmic vesicle. It is found in the secretory vesicle. The protein resides in the acrosome. May play a role in spermatozoa-egg-interaction. The JNK-interacting protein (JIP) group of scaffold proteins selectively mediates JNK signaling by aggregating specific components of the MAPK cascade to form a functional JNK signaling module. Regulates lysosomal positioning by acting as an adapter protein which links PIP4P1-positive lysosomes to the dynein-dynactin complex. Assists PIKFYVE selective functionality in microtubule-based endosome-to-TGN trafficking. This chain is C-Jun-amino-terminal kinase-interacting protein 4, found in Homo sapiens (Human).